A 715-amino-acid chain; its full sequence is Poly(A) polymerase alpha-A (715 aa).

ATP contacts are provided by residues F82 to P84, T91, D95 to D97, D149, K210, Y219, and G228 to V229. Mg(2+)-binding residues include D95, D97, and D149. The Nuclear localization signal 1 motif lies at R472–K489. Disordered stretches follow at residues D510 to P543, Q560 to P590, and K607 to D693. Composition is skewed to polar residues over residues M515–S539 and Q560–P588. Positions K624 to K639 match the Nuclear localization signal 2 motif. Residues D655–S673 are compositionally biased toward basic and acidic residues. The span at S674–S692 shows a compositional bias: polar residues.

Belongs to the poly(A) polymerase family. In terms of assembly, monomer. Mg(2+) serves as cofactor. Mn(2+) is required as a cofactor.

Its subcellular location is the nucleus. It catalyses the reaction RNA(n) + ATP = RNA(n)-3'-adenine ribonucleotide + diphosphate. Functionally, polymerase that creates the 3'-poly(A) tail of mRNA's. May acquire specificity through interaction with a cleavage and polyadenylation factor (CPSF). This is Poly(A) polymerase alpha-A (papola-a) from Xenopus laevis (African clawed frog).